The sequence spans 513 residues: 2-isopropylmalate synthase (513 aa).

In terms of domain architecture, Pyruvate carboxyltransferase spans 7-269; that stretch reads VYIFDTTLRD…TTGIVTEELF (263 aa). 4 residues coordinate Mn(2+): D16, H204, H206, and N240. A regulatory domain region spans residues 393-513; it reads ALQFLSVHCG…KEEERTCPQL (121 aa).

The protein belongs to the alpha-IPM synthase/homocitrate synthase family. LeuA type 1 subfamily. Homodimer. Requires Mn(2+) as cofactor.

Its subcellular location is the cytoplasm. It carries out the reaction 3-methyl-2-oxobutanoate + acetyl-CoA + H2O = (2S)-2-isopropylmalate + CoA + H(+). The protein operates within amino-acid biosynthesis; L-leucine biosynthesis; L-leucine from 3-methyl-2-oxobutanoate: step 1/4. In terms of biological role, catalyzes the condensation of the acetyl group of acetyl-CoA with 3-methyl-2-oxobutanoate (2-ketoisovalerate) to form 3-carboxy-3-hydroxy-4-methylpentanoate (2-isopropylmalate). In Solidesulfovibrio magneticus (strain ATCC 700980 / DSM 13731 / RS-1) (Desulfovibrio magneticus), this protein is 2-isopropylmalate synthase.